We begin with the raw amino-acid sequence, 488 residues long: Cysteine desulfurase, mitochondrial (488 aa).

The disordered stretch occupies residues 25–52 (LPKPLATSSSPATNAPNKTSNPKTGELH). Positions 30-47 (ATSSSPATNAPNKTSNPK) are enriched in polar residues. Residues 157-158 (AT), Asn-237, Gln-265, and 285-287 (SSH) contribute to the pyridoxal 5'-phosphate site. Lys-288 bears the N6-(pyridoxal phosphate)lysine mark. Residue Thr-325 participates in pyridoxal 5'-phosphate binding. The active-site Cysteine persulfide intermediate is the Cys-412. Position 412 (Cys-412) interacts with [2Fe-2S] cluster.

It belongs to the class-V pyridoxal-phosphate-dependent aminotransferase family. NifS/IscS subfamily. It depends on pyridoxal 5'-phosphate as a cofactor.

The protein resides in the mitochondrion. It catalyses the reaction (sulfur carrier)-H + L-cysteine = (sulfur carrier)-SH + L-alanine. Functionally, catalyzes the removal of elemental sulfur from cysteine to produce alanine. It supplies the inorganic sulfur for iron-sulfur (Fe-S) clusters. Plays a role in both tRNA-processing and mitochondrial metabolism. Involved in the 2-thio-modification of both 5-carboxymethylaminomethyl-2-thiouridine in mitochondrial tRNAs and 5-methoxycarbonylmethyl-2-thiouridine (mcm5s2U) in cytoplasmic tRNAs. In Candida albicans (strain SC5314 / ATCC MYA-2876) (Yeast), this protein is Cysteine desulfurase, mitochondrial (NFS1).